The sequence spans 361 residues: Phosphoserine aminotransferase (361 aa).

L-glutamate is bound at residue Arg-43. Residues 77–78 (AS), Trp-103, Thr-153, Asp-173, and Gln-196 contribute to the pyridoxal 5'-phosphate site. N6-(pyridoxal phosphate)lysine is present on Lys-197. Pyridoxal 5'-phosphate is bound at residue 238-239 (NT).

It belongs to the class-V pyridoxal-phosphate-dependent aminotransferase family. SerC subfamily. As to quaternary structure, homodimer. Pyridoxal 5'-phosphate serves as cofactor.

The protein resides in the cytoplasm. It carries out the reaction O-phospho-L-serine + 2-oxoglutarate = 3-phosphooxypyruvate + L-glutamate. The enzyme catalyses 4-(phosphooxy)-L-threonine + 2-oxoglutarate = (R)-3-hydroxy-2-oxo-4-phosphooxybutanoate + L-glutamate. Its pathway is amino-acid biosynthesis; L-serine biosynthesis; L-serine from 3-phospho-D-glycerate: step 2/3. It functions in the pathway cofactor biosynthesis; pyridoxine 5'-phosphate biosynthesis; pyridoxine 5'-phosphate from D-erythrose 4-phosphate: step 3/5. In terms of biological role, catalyzes the reversible conversion of 3-phosphohydroxypyruvate to phosphoserine and of 3-hydroxy-2-oxo-4-phosphonooxybutanoate to phosphohydroxythreonine. The sequence is that of Phosphoserine aminotransferase from Pseudomonas syringae pv. tomato (strain ATCC BAA-871 / DC3000).